The following is a 594-amino-acid chain: Membrane protein insertase YidC (594 aa).

The helical transmembrane segment at 7 to 27 (YFVAIALSVLILIAWQFFYVS) threads the bilayer. Residues 36 to 73 (AAEQAQQAQQTQQQPGAQPAAPGQALPGGAIPSAGESR) form a disordered region. Positions 37–65 (AEQAQQAQQTQQQPGAQPAAPGQALPGGA) are enriched in low complexity. The next 4 membrane-spanning stretches (helical) occupy residues 369–389 (LFGN…LIFF), 443–463 (WPIL…YVTI), 488–508 (LFGL…WPII), and 532–552 (FTWM…GLVI).

Belongs to the OXA1/ALB3/YidC family. Type 1 subfamily. In terms of assembly, interacts with the Sec translocase complex via SecD. Specifically interacts with transmembrane segments of nascent integral membrane proteins during membrane integration.

The protein resides in the cell inner membrane. Its function is as follows. Required for the insertion and/or proper folding and/or complex formation of integral membrane proteins into the membrane. Involved in integration of membrane proteins that insert both dependently and independently of the Sec translocase complex, as well as at least some lipoproteins. Aids folding of multispanning membrane proteins. The chain is Membrane protein insertase YidC from Rhizobium meliloti (strain 1021) (Ensifer meliloti).